We begin with the raw amino-acid sequence, 123 residues long: Histone H2B 2 (123 aa).

The disordered stretch occupies residues 1 to 32 (MAPPKPSAKGAKKAAKTVTKPKDGKKRRHARK). Serine 110 is a glycosylation site (O-linked (GlcNAc) serine). A Glycyl lysine isopeptide (Lys-Gly) (interchain with G-Cter in ubiquitin) cross-link involves residue lysine 118.

The protein belongs to the histone H2B family. As to quaternary structure, the nucleosome is a histone octamer containing two molecules each of H2A, H2B, H3 and H4 assembled in one H3-H4 heterotetramer and two H2A-H2B heterodimers. The octamer wraps approximately 147 bp of DNA. Monoubiquitination of Lys-118 gives a specific tag for epigenetic transcriptional activation and is also prerequisite for histone H3 'Lys-4' and 'Lys-79' methylation. Post-translationally, glcNAcylation at Ser-110 promotes monoubiquitination of Lys-118. It fluctuates in response to extracellular glucose, and associates with transcribed genes.

It localises to the nucleus. The protein localises to the chromosome. In terms of biological role, core component of nucleosome. Nucleosomes wrap and compact DNA into chromatin, limiting DNA accessibility to the cellular machineries which require DNA as a template. Histones thereby play a central role in transcription regulation, DNA repair, DNA replication and chromosomal stability. DNA accessibility is regulated via a complex set of post-translational modifications of histones, also called histone code, and nucleosome remodeling. The polypeptide is Histone H2B 2 (his-4) (Caenorhabditis elegans).